We begin with the raw amino-acid sequence, 609 residues long: Mitochondrial nucleoid-associated protein 1 (609 aa).

Topologically, residues 1–554 (MSDNPPRMEV…CNTTIRKSGF (554 aa)) are extracellular. 2 disordered regions span residues 133–163 (QEETKAQFYTSEKTSPKRELAEDLPKSGESR) and 406–425 (SPEGQLSLEPKSDSQFQASH). Residues 146 to 161 (TSPKRELAEDLPKSGE) are compositionally biased toward basic and acidic residues. Residues 555–571 (GGITMLSTGYFVLCCSW) traverse the membrane as a helical segment. The Cytoplasmic segment spans residues 572 to 609 (SFRRLKKLCRPLPWKSTVPPSVGVAKTTGDCRSKTCLD).

It is found in the mitochondrion inner membrane. Its subcellular location is the mitochondrion matrix. The protein resides in the mitochondrion nucleoid. Functionally, critical regulator of mitochondrial DNA (mtDNA) abundance. Binds dsDNA throughout the mitochondrial genome without sequence specificity and controls mtDNA copy number by promoting its replication. Also plays important roles in mitochondrial metabolism and cell proliferation. This chain is Mitochondrial nucleoid-associated protein 1, found in Pongo abelii (Sumatran orangutan).